The sequence spans 264 residues: Ribonuclease HII (264 aa).

In terms of domain architecture, RNase H type-2 spans 33–224 (GPVAGVDEVG…VRRVASGSNT (192 aa)). Positions 39, 40, and 133 each coordinate a divalent metal cation. A disordered region spans residues 222–264 (SNTAEVADGQPDPRDGTAQTGEGRWSKSSHPATMRATGRAQGT).

This sequence belongs to the RNase HII family. Requires Mn(2+) as cofactor. It depends on Mg(2+) as a cofactor.

The protein resides in the cytoplasm. It catalyses the reaction Endonucleolytic cleavage to 5'-phosphomonoester.. Functionally, endonuclease that specifically degrades the RNA of RNA-DNA hybrids. This is Ribonuclease HII from Mycobacterium bovis (strain BCG / Pasteur 1173P2).